An 824-amino-acid chain; its full sequence is C-Jun-amino-terminal kinase-interacting protein 2 (824 aa).

Disordered stretches follow at residues 1 to 28 (MADR…QDIS), 40 to 160 (ITDD…GFDL), 172 to 349 (CSPA…DSPW), and 361 to 501 (EGSS…APRD). The span at 77–110 (DFQEFEMIDDNEEEDDEDEEEEEEEEEGDGEGQE) shows a compositional bias: acidic residues. Positions 110–275 (EGGDPGSEAP…RMISSISETE (166 aa)) are JNK-binding domain (JBD). The span at 141–156 (LRLTTLGAQDSLNNNG) shows a compositional bias: polar residues. Residues 239–498 (GRGGRRSSQE…PGGRGTGPSA (260 aa)) are necessary for interaction with FGF13. 3 positions are modified to phosphoserine: S254, S302, and S305. Positions 268 to 305 (ISSISETELELSSDGGSSSSGRSSHLTNSIEEASSPAS) are enriched in low complexity. A compositionally biased stretch (acidic residues) spans 327 to 346 (TNSEYESGSESEPDLSEDAD). Over residues 416 to 432 (APPPPAPAAPRPGPAQP) the composition is skewed to pro residues. The span at 451–467 (AAPGRAARPGRACSAAC) shows a compositional bias: low complexity. Residues 468 to 484 (SEEEDEEDDEEEEDAED) show a composition bias toward acidic residues. An SH3 domain is found at 604 to 665 (EREQTHRAVF…PAFYAHAVPG (62 aa)). Residues 677 to 813 (PCWVERFDVQ…FLEYYQEHLA (137 aa)) form the PID domain.

Belongs to the JIP scaffold family. As to quaternary structure, forms homo- or heterooligomeric complexes. Binds specific components of the JNK signaling pathway namely JNK1, JNK2, JNK3, MAP2K7, MAP3K10, MAP3K11, MAP3K12 and MAPK13. Also binds the proline-rich domain-containing splice variant of apolipoprotein E receptor 2 (ApoER2). Binds the cytoplasmic tails of LRP1 and LRP2 (Megalin). Binds the TPR motif-containing C-terminal of kinesin light chain, Klc1, pre-assembled MAPK8IP1 scaffolding complexes are then transported as a cargo of kinesin, to the required subcellular location. Interacts with the cytoplasmic domain of APP. Interacts with DCLK2. Interacts with TIAM1 and TIAM2. Interacts with FGF13; enables the interaction with MAPK13 and may regulate the MAPK8IP2 scaffolding activity. Interacts with SH3RF2. As to expression, expressed mainly in the brain and pancreas, including insulin-secreting cells. In the nervous system, more abundantly expressed in the cerebellum, pituitary gland, occipital lobe and the amygdala. Also expressed in fetal brain. Very low levels found in uterus, ovary, prostate, colon, testis, adrenal gland, thyroid gland and salivary gland.

It is found in the cytoplasm. Its function is as follows. The JNK-interacting protein (JIP) group of scaffold proteins selectively mediates JNK signaling by aggregating specific components of the MAPK cascade to form a functional JNK signaling module. JIP2 inhibits IL1 beta-induced apoptosis in insulin-secreting cells. May function as a regulator of vesicle transport, through interactions with the JNK-signaling components and motor proteins. The protein is C-Jun-amino-terminal kinase-interacting protein 2 (MAPK8IP2) of Homo sapiens (Human).